A 185-amino-acid chain; its full sequence is MTRPSRLLETAAPPPQPSEEMIAAESDMVVILSALLCALICVAGLAAVVRCAWLRRFTAGGDSPSPNKGLKKKALQSLPRSTFTAAESTSGAAAEEGDSTECAICLTDFADGEEIRVLPLCGHSFHVECIDKWLVSRSSCPSCRRILTPVRCDRCGHASTAEMKDQAHRHQHHQHSSTTIPTFLP.

Residues 29 to 49 (VVILSALLCALICVAGLAAVV) form a helical membrane-spanning segment. The segment at 102 to 144 (CAICLTDFADGEEIRVLPLCGHSFHVECIDKWLVSRSSCPSCR) adopts an RING-type; atypical zinc-finger fold. The segment at 163-185 (MKDQAHRHQHHQHSSTTIPTFLP) is disordered. The segment covering 176-185 (SSTTIPTFLP) has biased composition (polar residues).

The protein belongs to the RING-type zinc finger family. ATL subfamily. In terms of assembly, interacts with BIK1. In terms of processing, auto-monoubiquitination. As to expression, expressed in stems, flowers and green siliques.

The protein resides in the membrane. The catalysed reaction is S-ubiquitinyl-[E2 ubiquitin-conjugating enzyme]-L-cysteine + [acceptor protein]-L-lysine = [E2 ubiquitin-conjugating enzyme]-L-cysteine + N(6)-ubiquitinyl-[acceptor protein]-L-lysine.. It participates in protein modification; protein ubiquitination. Its function is as follows. E3 ubiquitin-protein ligase that possess E3 ubiquitin ligase activity in vitro and mediates protein monoubiquitination. Triggers the monoubiquitination of phosphorylated BIK1 in response to pathogen-associated molecular pattern (PAMP) detection. This chain is Probable E3 ubiquitin-protein ligase ATL44, found in Arabidopsis thaliana (Mouse-ear cress).